Here is a 398-residue protein sequence, read N- to C-terminus: NADH-quinone oxidoreductase subunit D (398 aa).

Belongs to the complex I 49 kDa subunit family. In terms of assembly, NDH-1 is composed of 14 different subunits. Subunits NuoB, C, D, E, F, and G constitute the peripheral sector of the complex.

The protein localises to the cell inner membrane. The catalysed reaction is a quinone + NADH + 5 H(+)(in) = a quinol + NAD(+) + 4 H(+)(out). NDH-1 shuttles electrons from NADH, via FMN and iron-sulfur (Fe-S) centers, to quinones in the respiratory chain. The immediate electron acceptor for the enzyme in this species is believed to be ubiquinone. Couples the redox reaction to proton translocation (for every two electrons transferred, four hydrogen ions are translocated across the cytoplasmic membrane), and thus conserves the redox energy in a proton gradient. This is NADH-quinone oxidoreductase subunit D from Anaplasma marginale (strain St. Maries).